Here is a 507-residue protein sequence, read N- to C-terminus: tRNA-2-methylthio-N(6)-dimethylallyladenosine synthase (507 aa).

The MTTase N-terminal domain occupies 13–129 (RTYQVRTYGC…LPALLERARH (117 aa)). [4Fe-4S] cluster is bound by residues cysteine 22, cysteine 58, cysteine 92, cysteine 166, cysteine 170, and cysteine 173. A Radical SAM core domain is found at 152–388 (RESAYAAWVS…IALQESVTLE (237 aa)). In terms of domain architecture, TRAM spans 391-462 (QKQIGRMIEV…PHHLIADDGV (72 aa)). Residues 459 to 478 (DDGVRSHRRTRAGDAHEAGK) are compositionally biased toward basic and acidic residues. Residues 459-492 (DDGVRSHRRTRAGDAHEAGKKPSTPGIGLGMPAI) are disordered.

Belongs to the methylthiotransferase family. MiaB subfamily. Monomer. It depends on [4Fe-4S] cluster as a cofactor.

The protein localises to the cytoplasm. It catalyses the reaction N(6)-dimethylallyladenosine(37) in tRNA + (sulfur carrier)-SH + AH2 + 2 S-adenosyl-L-methionine = 2-methylsulfanyl-N(6)-dimethylallyladenosine(37) in tRNA + (sulfur carrier)-H + 5'-deoxyadenosine + L-methionine + A + S-adenosyl-L-homocysteine + 2 H(+). In terms of biological role, catalyzes the methylthiolation of N6-(dimethylallyl)adenosine (i(6)A), leading to the formation of 2-methylthio-N6-(dimethylallyl)adenosine (ms(2)i(6)A) at position 37 in tRNAs that read codons beginning with uridine. The chain is tRNA-2-methylthio-N(6)-dimethylallyladenosine synthase from Mycobacteroides abscessus (strain ATCC 19977 / DSM 44196 / CCUG 20993 / CIP 104536 / JCM 13569 / NCTC 13031 / TMC 1543 / L948) (Mycobacterium abscessus).